A 318-amino-acid polypeptide reads, in one-letter code: ATP synthase gamma chain (318 aa).

It belongs to the ATPase gamma chain family. In terms of assembly, F-type ATPases have 2 components, CF(1) - the catalytic core - and CF(0) - the membrane proton channel. CF(1) has five subunits: alpha(3), beta(3), gamma(1), delta(1), epsilon(1). CF(0) has three main subunits: a, b and c.

The protein localises to the cell membrane. In terms of biological role, produces ATP from ADP in the presence of a proton gradient across the membrane. The gamma chain is believed to be important in regulating ATPase activity and the flow of protons through the CF(0) complex. This chain is ATP synthase gamma chain, found in Lactobacillus johnsonii (strain CNCM I-12250 / La1 / NCC 533).